A 544-amino-acid polypeptide reads, in one-letter code: Chaperonin GroEL (544 aa).

Residues 29-32 (TLGP), lysine 50, 86-90 (DGTTT), glycine 415, and aspartate 495 contribute to the ATP site.

Belongs to the chaperonin (HSP60) family. As to quaternary structure, forms a cylinder of 14 subunits composed of two heptameric rings stacked back-to-back. Interacts with the co-chaperonin GroES.

Its subcellular location is the cytoplasm. It catalyses the reaction ATP + H2O + a folded polypeptide = ADP + phosphate + an unfolded polypeptide.. Together with its co-chaperonin GroES, plays an essential role in assisting protein folding. The GroEL-GroES system forms a nano-cage that allows encapsulation of the non-native substrate proteins and provides a physical environment optimized to promote and accelerate protein folding. This Tannerella forsythia (Bacteroides forsythus) protein is Chaperonin GroEL.